Here is a 188-residue protein sequence, read N- to C-terminus: Inner membrane-spanning protein YciB (188 aa).

5 consecutive transmembrane segments (helical) span residues 22–42, 50–70, 72–92, 121–141, and 149–169; these read IYIA…VTWM, MTLV…VFHN, LFIK…LLVS, FAWA…AFWL, and FKVF…GVYI.

This sequence belongs to the YciB family.

The protein localises to the cell inner membrane. Functionally, plays a role in cell envelope biogenesis, maintenance of cell envelope integrity and membrane homeostasis. This chain is Inner membrane-spanning protein YciB, found in Pectobacterium carotovorum subsp. carotovorum (strain PC1).